We begin with the raw amino-acid sequence, 452 residues long: Bifunctional protein GlmU (452 aa).

The segment at 1–226 (MSLDIVILAA…AMEVQGANDR (226 aa)) is pyrophosphorylase. Residues 8 to 11 (LAAG), Lys-22, Gln-73, 78 to 79 (GT), 99 to 101 (YGD), Gly-136, Glu-151, Asn-166, and Asn-224 contribute to the UDP-N-acetyl-alpha-D-glucosamine site. Asp-101 is a Mg(2+) binding site. Asn-224 provides a ligand contact to Mg(2+). The tract at residues 227-247 (IQLAELERHYQLRAARRLMAQ) is linker. The segment at 248–452 (GVTLRDPARF…IDGWQRPTKK (205 aa)) is N-acetyltransferase. UDP-N-acetyl-alpha-D-glucosamine-binding residues include Arg-330 and Lys-348. The active-site Proton acceptor is His-360. 2 residues coordinate UDP-N-acetyl-alpha-D-glucosamine: Tyr-363 and Asn-374. Acetyl-CoA contacts are provided by residues Ala-377, 383 to 384 (NY), Ser-402, Ala-420, and Arg-437.

This sequence in the N-terminal section; belongs to the N-acetylglucosamine-1-phosphate uridyltransferase family. In the C-terminal section; belongs to the transferase hexapeptide repeat family. As to quaternary structure, homotrimer. Requires Mg(2+) as cofactor.

Its subcellular location is the cytoplasm. It carries out the reaction alpha-D-glucosamine 1-phosphate + acetyl-CoA = N-acetyl-alpha-D-glucosamine 1-phosphate + CoA + H(+). The catalysed reaction is N-acetyl-alpha-D-glucosamine 1-phosphate + UTP + H(+) = UDP-N-acetyl-alpha-D-glucosamine + diphosphate. It participates in nucleotide-sugar biosynthesis; UDP-N-acetyl-alpha-D-glucosamine biosynthesis; N-acetyl-alpha-D-glucosamine 1-phosphate from alpha-D-glucosamine 6-phosphate (route II): step 2/2. Its pathway is nucleotide-sugar biosynthesis; UDP-N-acetyl-alpha-D-glucosamine biosynthesis; UDP-N-acetyl-alpha-D-glucosamine from N-acetyl-alpha-D-glucosamine 1-phosphate: step 1/1. It functions in the pathway bacterial outer membrane biogenesis; LPS lipid A biosynthesis. Catalyzes the last two sequential reactions in the de novo biosynthetic pathway for UDP-N-acetylglucosamine (UDP-GlcNAc). The C-terminal domain catalyzes the transfer of acetyl group from acetyl coenzyme A to glucosamine-1-phosphate (GlcN-1-P) to produce N-acetylglucosamine-1-phosphate (GlcNAc-1-P), which is converted into UDP-GlcNAc by the transfer of uridine 5-monophosphate (from uridine 5-triphosphate), a reaction catalyzed by the N-terminal domain. In Stutzerimonas stutzeri (strain A1501) (Pseudomonas stutzeri), this protein is Bifunctional protein GlmU.